Here is a 102-residue protein sequence, read N- to C-terminus: Death-associated protein 1 (102 aa).

Positions 1-102 (MSSPPEGKLE…RTQHIQQPRK (102 aa)) are disordered. S2 bears the N-acetylserine mark. S3 is subject to Phosphoserine; by MTOR. K29 bears the N6-acetyllysine mark. Residues 32–43 (HTGDTKEEKDKD) show a composition bias toward basic and acidic residues. Phosphoserine is present on S49. A Phosphoserine; by MTOR modification is found at S51. S91 carries the phosphoserine modification. A compositionally biased stretch (polar residues) spans 92–102 (PRTQHIQQPRK).

This sequence belongs to the DAP-DAPL1 family. Associates with ribosomes; inhibiting translation. Interacts with eiF5a (EIF5A and EIF5A2); inhibiting translation. Post-translationally, phosphorylated. Phosphorylation by MTOR inhibits the suppressive activity of DAP toward autophagy.

In terms of biological role, ribosome-binding protein involved in ribosome hibernation, a process during which ribosomes are stabilized in an inactive state and preserved from proteasomal degradation. Acts via its association with eiF5a (EIF5A and EIF5A2) at the polypeptide exit tunnel of the ribosome, preventing mRNA translation. Involved in ribosome hibernation in the mature oocyte by preventing mRNA translation, leading to ribosome inactivation. Ribosomes, which are produced in large quantities during oogenesis, are stored and translationally repressed in the oocyte and early embryo. Also acts as a negative regulator of autophagy. Involved in mediating interferon-gamma-induced cell death. This is Death-associated protein 1 from Homo sapiens (Human).